The primary structure comprises 124 residues: Fluoride-specific ion channel FluC 1 (124 aa).

The next 4 helical transmembrane spans lie at 7–27 (ALTL…GGWV), 35–55 (FPWG…LLQG), 63–83 (LLLV…TLML), and 101–121 (IVGT…AGAW).

Belongs to the fluoride channel Fluc/FEX (TC 1.A.43) family.

The protein resides in the cell membrane. It carries out the reaction fluoride(in) = fluoride(out). Fluoride-specific ion channel. Important for reducing fluoride concentration in the cell, thus reducing its toxicity. This is Fluoride-specific ion channel FluC 1 from Rubrobacter xylanophilus (strain DSM 9941 / JCM 11954 / NBRC 16129 / PRD-1).